Consider the following 118-residue polypeptide: Putative pterin-4-alpha-carbinolamine dehydratase (118 aa).

This sequence belongs to the pterin-4-alpha-carbinolamine dehydratase family.

The catalysed reaction is (4aS,6R)-4a-hydroxy-L-erythro-5,6,7,8-tetrahydrobiopterin = (6R)-L-erythro-6,7-dihydrobiopterin + H2O. In Xanthomonas oryzae pv. oryzae (strain PXO99A), this protein is Putative pterin-4-alpha-carbinolamine dehydratase.